The following is a 547-amino-acid chain: Sodium-coupled neutral amino acid transporter 4 (547 aa).

The segment at 1–30 (MDPMELRNVNIEPDDESSSGESAPDSYIGI) is disordered. Residues 1 to 104 (MDPMELRNVN…GLSYAMANTG (104 aa)) lie on the Extracellular side of the membrane. Residue S49 is modified to Phosphoserine. A helical membrane pass occupies residues 105–125 (IILFIIMLLAVAILSLYSVHL). Residues 126–151 (LLKTAKEGGSLIYEKLGEKAFGWPGK) are Cytoplasmic-facing. Residues 152 to 172 (IGAFVSITMQNIGAMSSYLFI) form a helical membrane-spanning segment. The Extracellular portion of the chain corresponds to 173–195 (IKYELPEVIRAFMGLEENTGEWY). A helical transmembrane segment spans residues 196–216 (LNGNYLIIFVSVGIILPLSLL). Residues 217 to 220 (KNLG) lie on the Cytoplasmic side of the membrane. The helical transmembrane segment at 221–241 (YLGYTSGFSLTCMVFFVSVVI) threads the bilayer. Residues 242-332 (YKKFQIPCPL…PKYFVFNSRT (91 aa)) are Extracellular-facing. C249 and C321 are oxidised to a cystine. N-linked (GlcNAc...) asparagine glycans are attached at residues N260, N264, and N276. The chain crosses the membrane as a helical span at residues 333 to 353 (AYAIPILVFAFVCHPEVLPIY). Over 354-369 (SELKDRSRRKMQTVSN) the chain is Cytoplasmic. The chain crosses the membrane as a helical span at residues 370–390 (ISITGMLVMYLLAALFGYLTF). At 391–411 (YGEVEDELLHAYSKVYTLDIP) the chain is on the extracellular side. Residues 412–432 (LLMVRLAVLVAVTLTVPIVLF) form a helical membrane-spanning segment. Residues 433–453 (PIRTSVITLLFPKRPFSWIRH) are Cytoplasmic-facing. The chain crosses the membrane as a helical span at residues 454 to 474 (FLIAAVLIALNNVLVILVPTI). Residues 475–476 (KY) lie on the Extracellular side of the membrane. The helical transmembrane segment at 477–497 (IFGFIGASSATMLIFILPAVF) threads the bilayer. The Cytoplasmic segment spans residues 498–514 (YLKLVKKETFRSPQKVG). The chain crosses the membrane as a helical span at residues 515–535 (ALIFLVVGIFFMIGSMALIII). The Extracellular portion of the chain corresponds to 536–547 (DWIYDPPNSKHH).

It belongs to the amino acid/polyamine transporter 2 family. The disulfide bond plays an important role in substrate transport, but has no effect on trafficking to the cell surface. In terms of tissue distribution, expressed almost exclusively in embryonic and adult liver, and at lower levels in the kidney. Expressed at lower levels in adult muscle and pancreas. Detected in fetal blood vessels. Expressed in syncytiotrophoblas of placenta during first trimester and at term. Highly expressed in first trimester placenta compared to term placenta.

The protein resides in the cell membrane. Its subcellular location is the cell projection. It localises to the microvillus membrane. The enzyme catalyses L-methionine(in) + Na(+)(in) = L-methionine(out) + Na(+)(out). The catalysed reaction is L-asparagine(in) + Na(+)(in) = L-asparagine(out) + Na(+)(out). It carries out the reaction L-threonine(in) + Na(+)(in) = L-threonine(out) + Na(+)(out). It catalyses the reaction L-serine(in) + Na(+)(in) = L-serine(out) + Na(+)(out). The enzyme catalyses glycine(in) + Na(+)(in) = glycine(out) + Na(+)(out). The catalysed reaction is L-alanine(in) + Na(+)(in) = L-alanine(out) + Na(+)(out). It carries out the reaction L-glutamine(in) + Na(+)(in) = L-glutamine(out) + Na(+)(out). It catalyses the reaction L-histidine(in) + Na(+)(in) = L-histidine(out) + Na(+)(out). The enzyme catalyses L-cysteine(in) + Na(+)(in) = L-cysteine(out) + Na(+)(out). The catalysed reaction is L-proline(in) + Na(+)(in) = L-proline(out) + Na(+)(out). Its function is as follows. Symporter that cotransports neutral amino acids and sodium ions from the extraccellular to the intracellular side of the cell membrane. The transport is electrogenic, pH dependent and partially tolerates substitution of Na(+) by Li(+). Preferentially transports smaller amino acids, such as glycine, L-alanine, L-serine, L-asparagine and L-threonine, followed by L-cysteine, L-histidine, L-proline and L-glutamine and L-methionine. The protein is Sodium-coupled neutral amino acid transporter 4 of Homo sapiens (Human).